The primary structure comprises 220 residues: Riboflavin kinase (220 aa).

The interval 1-92 is H-T-H motif-like; it reads MDTSDQYYRA…LSRILSIKSN (92 aa). The tract at residues 93 to 220 is riboflavin kinase; that stretch reads IVMTGIVVPG…GDEVTIEVTA (128 aa). 102 to 107 lines the CDP pocket; sequence GMGEGK. Thr-131 and Asn-133 together coordinate Mg(2+). The FMN site is built by Thr-188 and Glu-195. Residue 200 to 203 coordinates CDP; that stretch reads KYLR.

The protein belongs to the archaeal riboflavin kinase family. It depends on Mg(2+) as a cofactor.

It catalyses the reaction riboflavin + CTP = CDP + FMN + H(+). It functions in the pathway cofactor biosynthesis; FMN biosynthesis; FMN from riboflavin (CTP route): step 1/1. Its function is as follows. Catalyzes the CTP-dependent phosphorylation of riboflavin (vitamin B2) to form flavin mononucleotide (FMN). The polypeptide is Riboflavin kinase (ribK) (Thermoplasma volcanium (strain ATCC 51530 / DSM 4299 / JCM 9571 / NBRC 15438 / GSS1)).